We begin with the raw amino-acid sequence, 425 residues long: 2-oxoglutarate and iron-dependent oxygenase JMJD4 homolog (425 aa).

Residues 165 to 316 (AAQMPGYNFY…MVWQNLKNNL (152 aa)) form the JmjC domain. Residues histidine 212, aspartate 214, and histidine 284 each coordinate Fe cation.

The protein belongs to the JMJD6 family. The cofactor is Fe(2+).

It is found in the nucleus. The protein resides in the cytoplasm. The enzyme catalyses L-lysyl-[protein] + 2-oxoglutarate + O2 = 4-hydroxy-L-lysyl-[protein] + succinate + CO2. In terms of biological role, catalyzes the 2-oxoglutarate and iron-dependent C4-lysyl hydroxylation of eRF1 thereby promoting the translational termination efficiency of eRF1. May be involved in regulation of chromatin structure, promoting expansion of heterochromatin. The protein is 2-oxoglutarate and iron-dependent oxygenase JMJD4 homolog of Drosophila melanogaster (Fruit fly).